The primary structure comprises 219 residues: Protein-L-isoaspartate O-methyltransferase 2 (219 aa).

Residue S67 is part of the active site.

It belongs to the methyltransferase superfamily. L-isoaspartyl/D-aspartyl protein methyltransferase family.

It is found in the cytoplasm. It carries out the reaction [protein]-L-isoaspartate + S-adenosyl-L-methionine = [protein]-L-isoaspartate alpha-methyl ester + S-adenosyl-L-homocysteine. In terms of biological role, catalyzes the methyl esterification of L-isoaspartyl residues in peptides and proteins that result from spontaneous decomposition of normal L-aspartyl and L-asparaginyl residues. It plays a role in the repair and/or degradation of damaged proteins. The chain is Protein-L-isoaspartate O-methyltransferase 2 from Nitrosococcus oceani (strain ATCC 19707 / BCRC 17464 / JCM 30415 / NCIMB 11848 / C-107).